Consider the following 295-residue polypeptide: Ribosomal RNA small subunit methyltransferase A (295 aa).

S-adenosyl-L-methionine-binding residues include asparagine 31, leucine 33, glycine 58, glutamate 79, aspartate 104, and asparagine 129.

Belongs to the class I-like SAM-binding methyltransferase superfamily. rRNA adenine N(6)-methyltransferase family. RsmA subfamily.

The protein resides in the cytoplasm. It carries out the reaction adenosine(1518)/adenosine(1519) in 16S rRNA + 4 S-adenosyl-L-methionine = N(6)-dimethyladenosine(1518)/N(6)-dimethyladenosine(1519) in 16S rRNA + 4 S-adenosyl-L-homocysteine + 4 H(+). Its function is as follows. Specifically dimethylates two adjacent adenosines (A1518 and A1519) in the loop of a conserved hairpin near the 3'-end of 16S rRNA in the 30S particle. May play a critical role in biogenesis of 30S subunits. The polypeptide is Ribosomal RNA small subunit methyltransferase A (Leuconostoc mesenteroides subsp. mesenteroides (strain ATCC 8293 / DSM 20343 / BCRC 11652 / CCM 1803 / JCM 6124 / NCDO 523 / NBRC 100496 / NCIMB 8023 / NCTC 12954 / NRRL B-1118 / 37Y)).